The sequence spans 332 residues: GTP cyclohydrolase-2 (332 aa).

2 disordered regions span residues 1–20 (MASK…SETH) and 25–46 (PLLS…IPPE). Residues 29–41 (PTLTPSHIPSQTP) show a composition bias toward polar residues. 171–175 (RIHSE) contributes to the GTP binding site. 3 residues coordinate Zn(2+): Cys-176, Cys-187, and Cys-189. GTP contacts are provided by residues Gln-192, 214–216 (EGR), and Thr-236. The Proton acceptor role is filled by Asp-248. Arg-250 functions as the Nucleophile in the catalytic mechanism. GTP is bound by residues Thr-271 and Lys-276.

This sequence belongs to the GTP cyclohydrolase II family. Zn(2+) is required as a cofactor.

The enzyme catalyses GTP + 4 H2O = 2,5-diamino-6-hydroxy-4-(5-phosphoribosylamino)-pyrimidine + formate + 2 phosphate + 3 H(+). The protein operates within cofactor biosynthesis; riboflavin biosynthesis; 5-amino-6-(D-ribitylamino)uracil from GTP: step 1/4. In terms of biological role, catalyzes the conversion of GTP to 2,5-diamino-6-ribosylamino-4(3H)-pyrimidinone 5'-phosphate (DARP), formate and pyrophosphate. In Meyerozyma guilliermondii (strain ATCC 6260 / CBS 566 / DSM 6381 / JCM 1539 / NBRC 10279 / NRRL Y-324) (Yeast), this protein is GTP cyclohydrolase-2 (RIB1).